Reading from the N-terminus, the 323-residue chain is Acetylglutamate kinase (323 aa).

Residues 90 to 91, R112, and N218 contribute to the substrate site; that span reads GG.

Belongs to the acetylglutamate kinase family. ArgB subfamily.

The protein localises to the cytoplasm. It catalyses the reaction N-acetyl-L-glutamate + ATP = N-acetyl-L-glutamyl 5-phosphate + ADP. Its pathway is amino-acid biosynthesis; L-arginine biosynthesis; N(2)-acetyl-L-ornithine from L-glutamate: step 2/4. Its function is as follows. Catalyzes the ATP-dependent phosphorylation of N-acetyl-L-glutamate. The chain is Acetylglutamate kinase from Ehrlichia canis (strain Jake).